Here is a 369-residue protein sequence, read N- to C-terminus: Histidinol-phosphate aminotransferase (369 aa).

An N6-(pyridoxal phosphate)lysine modification is found at lysine 223.

This sequence belongs to the class-II pyridoxal-phosphate-dependent aminotransferase family. Histidinol-phosphate aminotransferase subfamily. Homodimer. The cofactor is pyridoxal 5'-phosphate.

The enzyme catalyses L-histidinol phosphate + 2-oxoglutarate = 3-(imidazol-4-yl)-2-oxopropyl phosphate + L-glutamate. The protein operates within amino-acid biosynthesis; L-histidine biosynthesis; L-histidine from 5-phospho-alpha-D-ribose 1-diphosphate: step 7/9. Functionally, catalyzes the conversion of imidazole acetol phosphate to histidinol phosphate. Can also transaminate aromatic amino acids and histidine in addition to histidinol phosphate. The sequence is that of Histidinol-phosphate aminotransferase from Zymomonas mobilis subsp. mobilis (strain ATCC 31821 / ZM4 / CP4).